The chain runs to 160 residues: Ribosomal RNA large subunit methyltransferase H (160 aa).

S-adenosyl-L-methionine-binding positions include leucine 76, glycine 108, and 127–132 (FGALTW).

It belongs to the RNA methyltransferase RlmH family. As to quaternary structure, homodimer.

It localises to the cytoplasm. It catalyses the reaction pseudouridine(1915) in 23S rRNA + S-adenosyl-L-methionine = N(3)-methylpseudouridine(1915) in 23S rRNA + S-adenosyl-L-homocysteine + H(+). Its function is as follows. Specifically methylates the pseudouridine at position 1915 (m3Psi1915) in 23S rRNA. The chain is Ribosomal RNA large subunit methyltransferase H from Mesorhizobium japonicum (strain LMG 29417 / CECT 9101 / MAFF 303099) (Mesorhizobium loti (strain MAFF 303099)).